We begin with the raw amino-acid sequence, 186 residues long: Oligoribonuclease (186 aa).

The Exonuclease domain occupies 8 to 171; sequence LIWIDLEMTG…DDIRESIAEL (164 aa). The active site involves tyrosine 129.

Belongs to the oligoribonuclease family.

It is found in the cytoplasm. Its function is as follows. 3'-to-5' exoribonuclease specific for small oligoribonucleotides. In Mannheimia succiniciproducens (strain KCTC 0769BP / MBEL55E), this protein is Oligoribonuclease.